Consider the following 405-residue polypeptide: MNIGGGKFLLGRISNNPTSGIVGLANVGKSTFFQAITNSKLGNPANYPFATIDAECAKVNIPSVPLSNLLRIYQSAKCVPGTLTIYDIAGLTRGASQGHGLGNKFLNDIRHVEGIFQVVRGFLKEDITHIEGNVDPVRDLSVVQDELILKDLEFLENIRERLSKKMRMVSKNSKEHQEMKIETELLDALEEHLFNGKKIRHFKDHWNLDEVKILNKHNFLTSKPTLILLNVSPQDYVRNENKFVRNIIEWINEFSPGDKFLLFSAEFESQLMECKGIASEYFDKIKEDTNVSDQQLVSAIPQIILEMRKLLNLISFFTCGPQEVHQWNIREGTTAQEAAGVIHSDLRETFISADVIKYDDLKKMEPPLNESLLKSKGLIKRAGKQYIMQDNDIALFKAAGGKIKK.

The region spanning 17-283 (PTSGIVGLAN…CKGIASEYFD (267 aa)) is the OBG-type G domain. ATP contacts are provided by residues 26-31 (NVGKST) and Val-231. One can recognise a TGS domain in the interval 312-398 (NLISFFTCGP…QDNDIALFKA (87 aa)).

It belongs to the TRAFAC class OBG-HflX-like GTPase superfamily. OBG GTPase family.

It localises to the mitochondrion. Functionally, hydrolyzes ATP, and can also hydrolyze GTP with lower efficiency. Has lower affinity for GTP. The protein is Obg-like ATPase homolog (YLF2) of Saccharomyces cerevisiae (strain ATCC 204508 / S288c) (Baker's yeast).